We begin with the raw amino-acid sequence, 373 residues long: Transcription factor SPATULA (373 aa).

Residues 1 to 21 (MISQREEREEKKQRVMGDKKL) are compositionally biased toward basic and acidic residues. Disordered stretches follow at residues 1-46 (MISQ…PSSS) and 141-210 (VQGN…KRRR). Over residues 141 to 160 (VQGNSSGTRVSSSSVGASGN) the composition is skewed to low complexity. Residues 161–177 (ETDEYDCESEEGGEAVV) show a composition bias toward acidic residues. A compositionally biased stretch (low complexity) spans 182–191 (SSKSGPSSRS). Positions 197 to 210 (RAAEVHNLSEKRRR) are enriched in basic and acidic residues. In terms of domain architecture, bHLH spans 197–246 (RAAEVHNLSEKRRRSRINEKMKALQSLIPNSNKTDKASMLDEAIEYLKQL).

In terms of assembly, homodimer. Interacts with HEC1, HEC2 and HEC3. Binds to RGL2 and RGA. In terms of tissue distribution, expressed in lateral root caps, young leaves, stipules, maturing pith cells of the stem, differentiating vascular cells, shoot apical meristems and flowers.

It localises to the nucleus. In terms of biological role, transcription factor that plays a role in floral organogenesis. Promotes the growth of carpel margins and of pollen tract tissues derived from them. The polypeptide is Transcription factor SPATULA (SPT) (Arabidopsis thaliana (Mouse-ear cress)).